We begin with the raw amino-acid sequence, 700 residues long: MAEFMWEIGTEEIPARMLPGAITAMGELTRTALQEAGLGFAQVESQGTPRRLLVVVHGLHDKQADVQEERRGPALQAAFDSDGNPTKAAQGFARGCGVDVDQLSRVETPKGTYLSYTLKQAGKGASEVLPGIMQQVFKALPWPKTMRWSDGESRFVRPVQSVTALLNGQQVAVELAENVRYTDAVSGHRFMGKGAVVVQDYASYQQAMADGKVMLKSEDRMATIRAGVLAQAASVGGVVASDEGLVAENASLTEWPVALLGRFDERYLEIPPEVLTTSMRYHQKYFPVLDAQGGLKPHFVVIANMETEDQTVLVRGYQRVLKARLEDAAFFWAEDRKIRLTDRLPDLQAVVWQAKLGSLFQKSQRMAHLASAIAARVAPQQAALAEKAGLYSKCDLVTGMVGEFPELQGIMGGYYLPRERAQDEVVALAIREHYMPAGAGDALPQSLCGRIVSLADKLDTLVGCFGMGITPTGTKDPFGLRRAALGVIRLLLQEQGLRLPLRQLCEEAYRQYGEIGLEMGEAQTVQGVLAFFYGRLQAHLKAEGVDYDLIDAVQGLNLDDLWDAVSRVKALVAFKQDAAYEALVAANKRMANILSKVEDSALDLTLGVDEAVLKASAEQGLAAAVAAVEDRVKTHSSNGRYAEALGELAALRGVIDTFFDEVMVMDEDDAVRHNRLRLLATVLGLFRQVADVSCLVVAEK.

Belongs to the class-II aminoacyl-tRNA synthetase family. In terms of assembly, tetramer of two alpha and two beta subunits.

It is found in the cytoplasm. It carries out the reaction tRNA(Gly) + glycine + ATP = glycyl-tRNA(Gly) + AMP + diphosphate. The protein is Glycine--tRNA ligase beta subunit of Magnetococcus marinus (strain ATCC BAA-1437 / JCM 17883 / MC-1).